Consider the following 229-residue polypeptide: Enolase-phosphatase E1 (229 aa).

The segment covering 208-218 has biased composition (polar residues); the sequence is DTQSTHRQVSS. The tract at residues 208–229 is disordered; sequence DTQSTHRQVSSFDDIHPEQIPT. A compositionally biased stretch (basic and acidic residues) spans 220 to 229; sequence DDIHPEQIPT.

This sequence belongs to the HAD-like hydrolase superfamily. MasA/MtnC family. As to quaternary structure, monomer. Mg(2+) is required as a cofactor.

It carries out the reaction 5-methylsulfanyl-2,3-dioxopentyl phosphate + H2O = 1,2-dihydroxy-5-(methylsulfanyl)pent-1-en-3-one + phosphate. It participates in amino-acid biosynthesis; L-methionine biosynthesis via salvage pathway; L-methionine from S-methyl-5-thio-alpha-D-ribose 1-phosphate: step 3/6. The protein operates within amino-acid biosynthesis; L-methionine biosynthesis via salvage pathway; L-methionine from S-methyl-5-thio-alpha-D-ribose 1-phosphate: step 4/6. Its function is as follows. Bifunctional enzyme that catalyzes the enolization of 2,3-diketo-5-methylthiopentyl-1-phosphate (DK-MTP-1-P) into the intermediate 2-hydroxy-3-keto-5-methylthiopentenyl-1-phosphate (HK-MTPenyl-1-P), which is then dephosphorylated to form the acireductone 1,2-dihydroxy-3-keto-5-methylthiopentene (DHK-MTPene). The sequence is that of Enolase-phosphatase E1 from Cronobacter sakazakii (strain ATCC BAA-894) (Enterobacter sakazakii).